A 454-amino-acid polypeptide reads, in one-letter code: N-acetyl-S-(2-succino)cysteine lyase (454 aa).

Fumarate is bound at residue 106 to 107; that stretch reads TT. Histidine 154 acts as the Proton donor/acceptor in catalysis. Arginine 233 serves as a coordination point for fumarate. Serine 277 acts as the Proton donor/acceptor in catalysis. Residues threonine 278 and 283–285 each bind fumarate; that span reads KRN.

Belongs to the lyase 1 family.

It catalyses the reaction N-acetyl-S-(2-succino)-L-cysteine = N-acetyl-L-cysteine + fumarate. It functions in the pathway amino-acid biosynthesis; L-cysteine biosynthesis. Its function is as follows. Catalyzes the cleavage of N-acetyl-S-(2-succino)cysteine into fumarate and N-acetylcysteine. Is involved in a S-(2-succino)cysteine (2SC) degradation pathway that allows the bacterium to recover cysteine from 2SC and to detoxify 2SC that may be a toxic metabolite. Can also perform the reverse reaction in vitro, and has minor activity against 2SC and other small molecule thiols. The protein is N-acetyl-S-(2-succino)cysteine lyase of Dickeya dadantii (strain 3937) (Erwinia chrysanthemi (strain 3937)).